The sequence spans 356 residues: Dynein axonemal heavy chain 12 (356 aa).

ANK repeat units follow at residues Asp17 to Val46, Ser50 to Arg81, Ser82 to Phe111, His124 to Gln153, Asp154 to Tyr183, and Cys185 to Leu218. An SOCS box domain is found at Trp290–Asp345.

It belongs to the dynein heavy chain family. Consists of at least two heavy chains and a number of intermediate and light chains.

It localises to the cytoplasm. It is found in the cytoskeleton. Its subcellular location is the cilium axoneme. It functions in the pathway protein modification; protein ubiquitination. Functionally, force generating protein of respiratory cilia. Produces force towards the minus ends of microtubules. Dynein has ATPase activity; the force-producing power stroke is thought to occur on release of ADP. Involved in sperm motility; implicated in sperm flagellar assembly. Its function is as follows. May be a substrate-recognition component of a SCF-like ECS (Elongin-Cullin-SOCS-box protein) E3 ubiquitin-protein ligase complex which mediates the ubiquitination and subsequent proteasomal degradation of target proteins. The chain is Dynein axonemal heavy chain 12 (DNAH12) from Bos taurus (Bovine).